The sequence spans 961 residues: Retinoblastoma-related protein 1 (961 aa).

The interval 404 to 606 is domain A; sequence TPVSTAMTTA…EKGSSMYNSL (203 aa). Positions 404 to 819 are pocket; that stretch reads TPVSTAMTTA…NEMFIPSVKP (416 aa). The interval 607-728 is spacer; the sequence is AVAKPSLAAE…PGGGGETCAE (122 aa). The segment at 729–819 is domain B; it reads TAINVFFGKI…NEMFIPSVKP (91 aa). Residues 829–856 are disordered; sequence NAEKNNHNDGQGPASPKPSPFPKLPDMS.

This sequence belongs to the retinoblastoma protein (RB) family.

The protein resides in the nucleus. Regulator of biological processes that recruits a histone deacetylase to control gene transcription. May play a role in the entry into mitosis, negatively regulating the cell proliferation. Formation of stable complexes with geminiviridae replication-associated proteins may create a cellular environment which favors viral DNA replication. The protein is Retinoblastoma-related protein 1 (RB1) of Nicotiana tabacum (Common tobacco).